A 342-amino-acid chain; its full sequence is S-adenosylmethionine:tRNA ribosyltransferase-isomerase (342 aa).

It belongs to the QueA family. In terms of assembly, monomer.

Its subcellular location is the cytoplasm. It catalyses the reaction 7-aminomethyl-7-carbaguanosine(34) in tRNA + S-adenosyl-L-methionine = epoxyqueuosine(34) in tRNA + adenine + L-methionine + 2 H(+). It functions in the pathway tRNA modification; tRNA-queuosine biosynthesis. In terms of biological role, transfers and isomerizes the ribose moiety from AdoMet to the 7-aminomethyl group of 7-deazaguanine (preQ1-tRNA) to give epoxyqueuosine (oQ-tRNA). This Oceanobacillus iheyensis (strain DSM 14371 / CIP 107618 / JCM 11309 / KCTC 3954 / HTE831) protein is S-adenosylmethionine:tRNA ribosyltransferase-isomerase.